A 184-amino-acid polypeptide reads, in one-letter code: Alpha-tubulin N-acetyltransferase (184 aa).

The 174-residue stretch at 1-174 folds into the N-acetyltransferase domain; the sequence is MNIPPEKMHN…NNFVIFAEYF (174 aa). Acetyl-CoA contacts are provided by residues 108–121 and 144–153; these read FYIQ…GLGL and SYKLQSFLKK.

The protein belongs to the acetyltransferase ATAT1 family.

It carries out the reaction L-lysyl-[alpha-tubulin] + acetyl-CoA = N(6)-acetyl-L-lysyl-[alpha-tubulin] + CoA + H(+). Functionally, specifically acetylates 'Lys-40' in alpha-tubulin on the lumenal side of microtubules. Promotes microtubule destabilization and accelerates microtubule dynamics; this activity may be independent of acetylation activity. Acetylates alpha-tubulin with a slow enzymatic rate, due to a catalytic site that is not optimized for acetyl transfer. Enters the microtubule through each end and diffuses quickly throughout the lumen of microtubules. Acetylates only long/old microtubules because of its slow acetylation rate since it does not have time to act on dynamically unstable microtubules before the enzyme is released. This is Alpha-tubulin N-acetyltransferase from Plasmodium knowlesi (strain H).